We begin with the raw amino-acid sequence, 157 residues long: uncharacterized protein (157 aa).

2 disordered regions span residues A76–G105 and V132–G157. The span at P135–P148 shows a compositional bias: low complexity.

To M.pneumoniae MPN_091 and MPN_413.

This is an uncharacterized protein from Mycoplasma pneumoniae (strain ATCC 29342 / M129 / Subtype 1) (Mycoplasmoides pneumoniae).